The primary structure comprises 596 residues: Elongation factor 4 (596 aa).

Residues 2 to 184 form the tr-type G domain; sequence DHIRNFSIIA…AVVARIPPPK (183 aa). GTP-binding positions include 14–19 and 131–134; these read DHGKST and NKID.

It belongs to the TRAFAC class translation factor GTPase superfamily. Classic translation factor GTPase family. LepA subfamily.

It localises to the cell inner membrane. It carries out the reaction GTP + H2O = GDP + phosphate + H(+). Required for accurate and efficient protein synthesis under certain stress conditions. May act as a fidelity factor of the translation reaction, by catalyzing a one-codon backward translocation of tRNAs on improperly translocated ribosomes. Back-translocation proceeds from a post-translocation (POST) complex to a pre-translocation (PRE) complex, thus giving elongation factor G a second chance to translocate the tRNAs correctly. Binds to ribosomes in a GTP-dependent manner. The chain is Elongation factor 4 from Dechloromonas aromatica (strain RCB).